We begin with the raw amino-acid sequence, 1358 residues long: MAYSFTEKKRIRKSFGKRQDVLEVPYLLATQVDSYRRFLQLDKQPAARSDEGLHAALKSVFPIKSHSGNIVLEYVSYRLGDPVFDVKECQQRGTTYAAPLRVLVRLVVYDKDAPVGAKVVRDIKEQEIYMGEIPLMTDNGTFVINGTERVIVSQLHRSPGVFFDHDRGKTHSSGKLLFNARIIPYRGSWLDFEFDHKDCVYVRIDRRRKLPATVLLRALGYDNEQIIAEFFDTNRFLLSSAGIQLELIPERLRGDIASFDIRLGDQIVVEKDHRITARHIRMLQKENVNLLDVPKDYLYGKILAHNVVDTSTGELIAKVNQEITEDVYARLVAAAIPEIRTLYVNDLDRGPYISNTMRIDLTETQLDALVEIYRMMRPGEPPTKEAAQTLFENLFFSAERYDLSAVGRMKFNRRLGRTDPTGPGVLENDDIIAVLKELINIRNGGGTVDDIDHLGNRRVRSVGEMVENQFRLGLVRVERAVKERLSLPDADGLMPQEIINAKPVAASIKEFFGSSQLSQFMDQNNPLSEVTHKRRVSALGPGGLARERAGFEVRDVHTTHYGRVCPIETPEGPNIGLINSLAVYSRTNEYGFLETPYRKVIDGRVTDQIEYLSAIEEGQYYIAQASASVDENGMLKDELVSCRHKDEFTLASRENINYMDVSSKQIVSVAASLIPFLEHDDANRALMGSNMQRQAVPTLRTEKPLVGTGMERIVARDSGVAVVAKRGGTVEFVDASRIVVRVNDEETEAGVPGVDIYNLTKYTRSNQNTCINQRPLVKPGDVVARNDVLADGPSTDMGELALGQNLLVAFMPWNGYNFEDSILISERVVQDDRFTTIHIEEKTCVARDTKLGPEEITADIPNVGEAALSKLDESGIVYIGAEVKAGDILVGKVTPKGETQLTPEEKLLRAIFGEKASDVKDTSLRVPSGMDGTVIDVQVFTRDGVKKDERARQIEEAEIERVRKDLNDQLRIIEKDFYQRAEQMVLGKVADMGPGGLKRGATITREYLDSIKPAQWLEIRLQDEDVNLQIEAIAEQIAQQREEIAKRLEEKRRKITMGDDLAPGVLKMVKVYLAVKRRIQPGDKMAGRHGNKGVISRIVPVEDMPYSADGTPVDIVLNPLGVPSRMNVGQVLETHLGWAAKGVGLKIGRMLEAKAKIEEIRSFLTQVYNVSGRQEDIASLSDAEVLELAGNLQDGVPMATPVFDGATEEDIKAMLRLADLPESGQATLFDGRTGDVFDRPVTVGYMYMLKLNHLVDDKMHARSTGPYSLVTQQPLGGKAQFGGQRFGEMEVWALEAYGAAYTLQEMLTVKSDDVNGRTKMYKNIVDGDHRMEAAMPESFNVLIKEIRSLGINIELEQD.

It belongs to the RNA polymerase beta chain family. As to quaternary structure, the RNAP catalytic core consists of 2 alpha, 1 beta, 1 beta' and 1 omega subunit. When a sigma factor is associated with the core the holoenzyme is formed, which can initiate transcription.

It catalyses the reaction RNA(n) + a ribonucleoside 5'-triphosphate = RNA(n+1) + diphosphate. Its function is as follows. DNA-dependent RNA polymerase catalyzes the transcription of DNA into RNA using the four ribonucleoside triphosphates as substrates. In Methylococcus capsulatus (strain ATCC 33009 / NCIMB 11132 / Bath), this protein is DNA-directed RNA polymerase subunit beta.